The following is a 279-amino-acid chain: NADPH-dependent 7-cyano-7-deazaguanine reductase (279 aa).

Position 86–88 (86–88) interacts with substrate; it reads IES. 88–89 lines the NADPH pocket; that stretch reads SK. The active-site Thioimide intermediate is Cys187. Asp194 functions as the Proton donor in the catalytic mechanism. Residue 226–227 participates in substrate binding; sequence HE. 255-256 provides a ligand contact to NADPH; the sequence is RG.

It belongs to the GTP cyclohydrolase I family. QueF type 2 subfamily. Homodimer.

It localises to the cytoplasm. It carries out the reaction 7-aminomethyl-7-carbaguanine + 2 NADP(+) = 7-cyano-7-deazaguanine + 2 NADPH + 3 H(+). It functions in the pathway tRNA modification; tRNA-queuosine biosynthesis. Catalyzes the NADPH-dependent reduction of 7-cyano-7-deazaguanine (preQ0) to 7-aminomethyl-7-deazaguanine (preQ1). This is NADPH-dependent 7-cyano-7-deazaguanine reductase from Glaesserella parasuis serovar 5 (strain SH0165) (Haemophilus parasuis).